The chain runs to 384 residues: Dual specificity protein phosphatase 5 (384 aa).

Positions 19 to 141 constitute a Rhodanese domain; sequence AEARCVVLDC…FYSQYPECCV (123 aa). Positions 53–74 match the Nuclear localization signal motif; it reads RRARGGAVSARYVLADEAARAR. A Tyrosine-protein phosphatase domain is found at 178 to 319; the sequence is GPVEILPFLY…LLQYESEILP (142 aa). Cys263 serves as the catalytic Phosphocysteine intermediate.

The protein belongs to the protein-tyrosine phosphatase family. Non-receptor class dual specificity subfamily.

The protein localises to the nucleus. It carries out the reaction O-phospho-L-tyrosyl-[protein] + H2O = L-tyrosyl-[protein] + phosphate. The catalysed reaction is O-phospho-L-seryl-[protein] + H2O = L-seryl-[protein] + phosphate. The enzyme catalyses O-phospho-L-threonyl-[protein] + H2O = L-threonyl-[protein] + phosphate. Its function is as follows. Dual specificity protein phosphatase; active with phosphotyrosine, phosphoserine and phosphothreonine residues. The highest relative activity is toward ERK1. This Rattus norvegicus (Rat) protein is Dual specificity protein phosphatase 5 (Dusp5).